The sequence spans 669 residues: Putative transcription factor SOX-14 (669 aa).

The span at 1–12 (MIAKPNQATTEP) shows a compositional bias: polar residues. Disordered regions lie at residues 1–149 (MIAK…EMTL), 254–336 (YKYR…PKYE), and 419–439 (SSLT…MDNI). Residues 17-37 (RPGTVPTVPATTPARPATITI) are compositionally biased toward low complexity. Positions 52-71 (TLPPFSPSPSPASSPSPAPA) are enriched in pro residues. A compositionally biased stretch (polar residues) spans 75-84 (GAQKTQSQAA). Residues 88-105 (PAAVASPSAPVAAAAPKT) show a composition bias toward low complexity. Residues 130–145 (RESEMDGERSPSHSGH) are compositionally biased toward basic and acidic residues. A DNA-binding region (HMG box) is located at residues 187–255 (IKRPMNAFMV…LHMIEYPNYK (69 aa)). The segment covering 284 to 294 (TTNNNNSLTTL) has biased composition (low complexity). Positions 295–318 (AINGTTTAGRKSKRSTSTCQSGSA) are enriched in polar residues. A compositionally biased stretch (basic and acidic residues) spans 322–336 (LRNDSGDTSSKPKYE). The span at 419-431 (SSLTQSQHNQSDP) shows a compositional bias: polar residues.

It is found in the nucleus. The protein is Putative transcription factor SOX-14 (Sox14) of Drosophila melanogaster (Fruit fly).